Consider the following 93-residue polypeptide: Putative pterin-4-alpha-carbinolamine dehydratase (93 aa).

The protein belongs to the pterin-4-alpha-carbinolamine dehydratase family.

It catalyses the reaction (4aS,6R)-4a-hydroxy-L-erythro-5,6,7,8-tetrahydrobiopterin = (6R)-L-erythro-6,7-dihydrobiopterin + H2O. The chain is Putative pterin-4-alpha-carbinolamine dehydratase from Thermomicrobium roseum (strain ATCC 27502 / DSM 5159 / P-2).